The following is a 290-amino-acid chain: MNFQELILALQNYWAKQGCIIQQPYDMEKGAGTFNPATFLRVLGPEPWNVAYVEPSRRPTDGRYGENPNRLQHYYQFQVVMKPSPTNIQELYLDSLKSFGISPSRHDIRFVEDDWESPTLGAWGLGWEVWLDGMEITQFTYFQQVGGIDLKPVSAEITYGCERIAMYLQGVDNVYDLEWIDGIKYGDVHHQSEVEYSTYNFEEADAGMLFNLFDMYEKECSRLAKSQLVLPAYDYVLKASHAFNLLDARGAISVTERAHYIGRVRNLARLCAEGYVAQREKLGFPLIKGR.

This sequence belongs to the class-II aminoacyl-tRNA synthetase family. As to quaternary structure, tetramer of two alpha and two beta subunits.

The protein localises to the cytoplasm. It carries out the reaction tRNA(Gly) + glycine + ATP = glycyl-tRNA(Gly) + AMP + diphosphate. This is Glycine--tRNA ligase alpha subunit from Syntrophotalea carbinolica (strain DSM 2380 / NBRC 103641 / GraBd1) (Pelobacter carbinolicus).